The sequence spans 85 residues: Small ribosomal subunit protein uS17 (85 aa).

The protein belongs to the universal ribosomal protein uS17 family. In terms of assembly, part of the 30S ribosomal subunit.

Its function is as follows. One of the primary rRNA binding proteins, it binds specifically to the 5'-end of 16S ribosomal RNA. The sequence is that of Small ribosomal subunit protein uS17 from Lachnospira eligens (strain ATCC 27750 / DSM 3376 / VPI C15-48 / C15-B4) (Eubacterium eligens).